We begin with the raw amino-acid sequence, 654 residues long: Chaperone protein HtpG (654 aa).

The interval 1–344 (MTVENAPQRE…SDDLPLNVSR (344 aa)) is a; substrate-binding. The tract at residues 345 to 556 (ELLQDSQVVR…EGGSPAYLER (212 aa)) is b. The tract at residues 557-654 (LLQQRGRGAG…AQTPASATAS (98 aa)) is c.

This sequence belongs to the heat shock protein 90 family. As to quaternary structure, homodimer.

Its subcellular location is the cytoplasm. Functionally, molecular chaperone. Has ATPase activity. The sequence is that of Chaperone protein HtpG from Myxococcus xanthus (strain DK1622).